The following is a 303-amino-acid chain: Methionyl-tRNA formyltransferase (303 aa).

(6S)-5,6,7,8-tetrahydrofolate is bound at residue 110 to 113 (SLLP).

This sequence belongs to the Fmt family.

The catalysed reaction is L-methionyl-tRNA(fMet) + (6R)-10-formyltetrahydrofolate = N-formyl-L-methionyl-tRNA(fMet) + (6S)-5,6,7,8-tetrahydrofolate + H(+). Attaches a formyl group to the free amino group of methionyl-tRNA(fMet). The formyl group appears to play a dual role in the initiator identity of N-formylmethionyl-tRNA by promoting its recognition by IF2 and preventing the misappropriation of this tRNA by the elongation apparatus. This chain is Methionyl-tRNA formyltransferase, found in Ehrlichia ruminantium (strain Welgevonden).